The sequence spans 1169 residues: Zinc finger protein 862 (1169 aa).

Residues valine 11–glutamate 77 enclose the KRAB 1 domain. Residues lysine 135–arginine 218 form a TTF-type 1 zinc finger. Positions valine 333–glycine 404 constitute a KRAB 2 domain. The TTF-type 2 zinc finger occupies arginine 461 to valine 544.

The protein resides in the nucleus. May be involved in transcriptional regulation. The protein is Zinc finger protein 862 (ZNF862) of Homo sapiens (Human).